Consider the following 143-residue polypeptide: Chorion class A protein Ld5 (143 aa).

Residues M1–S21 form the signal peptide.

This sequence belongs to the chorion protein family.

This protein is one of many from the eggshell of the gypsy moth. This Lymantria dispar (Gypsy moth) protein is Chorion class A protein Ld5.